The chain runs to 378 residues: MKILVDENMPYARDLFSRLGEVTAVPGRPIPVAQLADADALMVRSVTKVNESLLAGKPIKFVGTATAGTDHVDEAWLKQAGIGFSAAPGCNAIAVVEYVFSSLLMLAERDGFSLYDRTVGIVGVGNVGRRLQARLEALGIKTLLCDPPRADRGDEGDFRSLDELVQRADILTFHTPLFKDGPYKTLHLADEKLIRSLKPGAILINACRGAVVDNTALLTCLNEGQKLSVVLDVWEGEPELNVELLKKVDIGTPHIAGYTLEGKARGTTQVFEAYSKFIGHEQHVALDTLLPAPEFGRITLHGPLDQPTLKRLVHLVYDVRRDDAPLRKVAGIPGEFDKLRKNYLERREWSSLYVICDDASAASLLCKLGFNAVHHPAR.

Substrate contacts are provided by S45 and T66. 2 residues coordinate NAD(+): D146 and T175. R208 is a catalytic residue. An NAD(+)-binding site is contributed by D232. E237 is an active-site residue. Residue H254 is the Proton donor of the active site. G257 contributes to the NAD(+) binding site. Y258 is a binding site for substrate.

This sequence belongs to the D-isomer specific 2-hydroxyacid dehydrogenase family. PdxB subfamily. As to quaternary structure, homodimer.

It localises to the cytoplasm. The enzyme catalyses 4-phospho-D-erythronate + NAD(+) = (R)-3-hydroxy-2-oxo-4-phosphooxybutanoate + NADH + H(+). It functions in the pathway cofactor biosynthesis; pyridoxine 5'-phosphate biosynthesis; pyridoxine 5'-phosphate from D-erythrose 4-phosphate: step 2/5. Functionally, catalyzes the oxidation of erythronate-4-phosphate to 3-hydroxy-2-oxo-4-phosphonooxybutanoate. This Escherichia coli (strain ATCC 8739 / DSM 1576 / NBRC 3972 / NCIMB 8545 / WDCM 00012 / Crooks) protein is Erythronate-4-phosphate dehydrogenase.